The sequence spans 240 residues: Uridylate kinase (240 aa).

Position 12–15 (12–15 (KLSG)) interacts with ATP. The tract at residues 20 to 25 (GSQGFG) is involved in allosteric activation by GTP. Gly-54 is a UMP binding site. Residues Gly-55 and Arg-59 each contribute to the ATP site. UMP contacts are provided by residues Asp-74 and 135–142 (TGNPYFST). ATP-binding residues include Tyr-168 and Asp-171.

It belongs to the UMP kinase family. Homohexamer.

The protein localises to the cytoplasm. It carries out the reaction UMP + ATP = UDP + ADP. It functions in the pathway pyrimidine metabolism; CTP biosynthesis via de novo pathway; UDP from UMP (UMPK route): step 1/1. With respect to regulation, allosterically activated by GTP. Inhibited by UTP. Catalyzes the reversible phosphorylation of UMP to UDP. In Desulfitobacterium hafniense (strain Y51), this protein is Uridylate kinase.